Consider the following 379-residue polypeptide: UDP-N-acetylglucosamine--N-acetylmuramyl-(pentapeptide) pyrophosphoryl-undecaprenol N-acetylglucosamine transferase (379 aa).

UDP-N-acetyl-alpha-D-glucosamine is bound by residues 17 to 19, Asn128, Arg169, Ser197, and Gln298; that span reads TGG.

It belongs to the glycosyltransferase 28 family. MurG subfamily.

The protein localises to the cell inner membrane. It catalyses the reaction di-trans,octa-cis-undecaprenyl diphospho-N-acetyl-alpha-D-muramoyl-L-alanyl-D-glutamyl-meso-2,6-diaminopimeloyl-D-alanyl-D-alanine + UDP-N-acetyl-alpha-D-glucosamine = di-trans,octa-cis-undecaprenyl diphospho-[N-acetyl-alpha-D-glucosaminyl-(1-&gt;4)]-N-acetyl-alpha-D-muramoyl-L-alanyl-D-glutamyl-meso-2,6-diaminopimeloyl-D-alanyl-D-alanine + UDP + H(+). It participates in cell wall biogenesis; peptidoglycan biosynthesis. In terms of biological role, cell wall formation. Catalyzes the transfer of a GlcNAc subunit on undecaprenyl-pyrophosphoryl-MurNAc-pentapeptide (lipid intermediate I) to form undecaprenyl-pyrophosphoryl-MurNAc-(pentapeptide)GlcNAc (lipid intermediate II). This Brucella suis biovar 1 (strain 1330) protein is UDP-N-acetylglucosamine--N-acetylmuramyl-(pentapeptide) pyrophosphoryl-undecaprenol N-acetylglucosamine transferase.